A 425-amino-acid chain; its full sequence is Monoacylglycerol lipase ABHD2 (425 aa).

The Cytoplasmic portion of the chain corresponds to Met1 to Glu9. The helical; Signal-anchor for type II membrane protein transmembrane segment at Leu10–Val30 threads the bilayer. Topologically, residues Arg31 to Glu425 are extracellular. Residues Met128–Gly382 enclose the AB hydrolase-1 domain. Asn136 is a glycosylation site (N-linked (GlcNAc...) asparagine). Ser207 acts as the Nucleophile in catalysis. Residues Asp345 and His376 each act as charge relay system in the active site. A glycan (N-linked (GlcNAc...) asparagine) is linked at Asn410.

Belongs to the AB hydrolase superfamily. AB hydrolase 4 family.

It localises to the cell membrane. It carries out the reaction Hydrolyzes glycerol monoesters of long-chain fatty acids.. The enzyme catalyses an acetyl ester + H2O = an aliphatic alcohol + acetate + H(+). The catalysed reaction is a triacylglycerol + H2O = a diacylglycerol + a fatty acid + H(+). It catalyses the reaction 2-(5Z,8Z,11Z,14Z-eicosatetraenoyl)-glycerol + H2O = glycerol + (5Z,8Z,11Z,14Z)-eicosatetraenoate + H(+). It carries out the reaction a butanoate ester + H2O = an aliphatic alcohol + butanoate + H(+). The enzyme catalyses hexadecanoate ester + H2O = an aliphatic alcohol + hexadecanoate + H(+). Acylglycerol lipase activity is activated upon binding to progesterone. Functionally, progesterone-dependent acylglycerol lipase that catalyzes hydrolysis of endocannabinoid arachidonoylglycerol (AG) from cell membrane. Acts as a progesterone receptor: progesterone-binding activates the acylglycerol lipase activity, mediating degradation of 1-arachidonoylglycerol (1AG) and 2-arachidonoylglycerol (2AG) to glycerol and arachidonic acid (AA). Also displays an ester hydrolase activity against acetyl ester, butanoate ester and hexadecanoate ester. Plays a key role in sperm capacitation in response to progesterone by mediating degradation of 2AG, an inhibitor of the sperm calcium channel CatSper, leading to calcium influx via CatSper and sperm activation. May also play a role in smooth muscle cells migration. The polypeptide is Monoacylglycerol lipase ABHD2 (ABHD2) (Bos taurus (Bovine)).